Reading from the N-terminus, the 1024-residue chain is Error-prone DNA polymerase (1024 aa).

The protein belongs to the DNA polymerase type-C family. DnaE2 subfamily.

It is found in the cytoplasm. It carries out the reaction DNA(n) + a 2'-deoxyribonucleoside 5'-triphosphate = DNA(n+1) + diphosphate. In terms of biological role, DNA polymerase involved in damage-induced mutagenesis and translesion synthesis (TLS). It is not the major replicative DNA polymerase. This Vibrio campbellii (strain ATCC BAA-1116) protein is Error-prone DNA polymerase.